The primary structure comprises 460 residues: Phosphoenolpyruvate carboxylase (460 aa).

This sequence belongs to the PEPCase type 2 family. As to quaternary structure, homotetramer. It depends on Mg(2+) as a cofactor.

The catalysed reaction is oxaloacetate + phosphate = phosphoenolpyruvate + hydrogencarbonate. Catalyzes the irreversible beta-carboxylation of phosphoenolpyruvate (PEP) to form oxaloacetate (OAA), a four-carbon dicarboxylic acid source for the tricarboxylic acid cycle. The chain is Phosphoenolpyruvate carboxylase from Pyrobaculum arsenaticum (strain DSM 13514 / JCM 11321 / PZ6).